The sequence spans 594 residues: MWCLLRGLGRPGALARGALGQQQSLGARALASAGSESRDEYSYVVVGAGSAGCVLAGRLTEDPAERVLLLEAGPKDVLAGSKRLSWKIHMPAALVANLCDDRYNWCYHTEVQRGLDGRVLYWPRGRVWGGSSSLNAMVYVRGHAEDYERWQRQGARGWDYAHCLPYFRKAQGHELGASRYRGADGPLRVSRGKTNHPLHCAFLEATQQAGYPLTEDMNGFQQEGFGWMDMTIHEGKRWSAACAYLHPALSRTNLKAEAETLVSRVLFEGTRAVGVEYVKNGQSHRAYASKEVILSGGAINSPQLLMLSGIGNADDLKKLGIPVVCHLPGVGQNLQDHLEIYIQQACTRPITLHSAQKPLRKVCIGLEWLWKFTGEGATAHLETGGFIRSQPGVPHPDIQFHFLPSQVIDHGRVPTQQEAYQVHVGPMRGTSVGWLKLRSANPQDHPVIQPNYLSTETDIEDFRLCVKLTREIFAQEALAPFRGKELQPGSHIQSDKEIDAFVRAKADSAYHPSCTCKMGQPSDPTAVVDPQTRVLGVENLRVVDASIMPSMVSGNLNAPTIMIAEKAADIIKGQPALWDKDVPVYKPRTLATQR.

The N-terminal 29 residues, 1 to 29, are a transit peptide targeting the mitochondrion; sequence MWCLLRGLGRPGALARGALGQQQSLGARA. Position 42–71 (42–71) interacts with FAD; it reads SYVVVGAGSAGCVLAGRLTEDPAERVLLLE. Lysine 436 bears the N6-succinyllysine mark. N6-acetyllysine; alternate occurs at positions 484 and 496. Lysine 484 and lysine 496 each carry N6-succinyllysine; alternate. Catalysis depends on histidine 511, which acts as the Proton acceptor. Position 580 is an N6-acetyllysine (lysine 580).

Belongs to the GMC oxidoreductase family. FAD serves as cofactor.

Its subcellular location is the mitochondrion inner membrane. The enzyme catalyses choline + A = betaine aldehyde + AH2. The protein operates within amine and polyamine biosynthesis; betaine biosynthesis via choline pathway; betaine aldehyde from choline (cytochrome c reductase route): step 1/1. This is Choline dehydrogenase, mitochondrial (CHDH) from Homo sapiens (Human).